Here is a 383-residue protein sequence, read N- to C-terminus: UDP-N-acetylglucosamine--N-acetylmuramyl-(pentapeptide) pyrophosphoryl-undecaprenol N-acetylglucosamine transferase (383 aa).

Residues 10–12 (TGG), Asn-124, Arg-165, Ser-190, Ile-245, and Gln-290 each bind UDP-N-acetyl-alpha-D-glucosamine. Residues 363-383 (SPFGQAREPGQKPARPPDPAS) form a disordered region.

Belongs to the glycosyltransferase 28 family. MurG subfamily.

It localises to the cell inner membrane. The enzyme catalyses di-trans,octa-cis-undecaprenyl diphospho-N-acetyl-alpha-D-muramoyl-L-alanyl-D-glutamyl-meso-2,6-diaminopimeloyl-D-alanyl-D-alanine + UDP-N-acetyl-alpha-D-glucosamine = di-trans,octa-cis-undecaprenyl diphospho-[N-acetyl-alpha-D-glucosaminyl-(1-&gt;4)]-N-acetyl-alpha-D-muramoyl-L-alanyl-D-glutamyl-meso-2,6-diaminopimeloyl-D-alanyl-D-alanine + UDP + H(+). It participates in cell wall biogenesis; peptidoglycan biosynthesis. Cell wall formation. Catalyzes the transfer of a GlcNAc subunit on undecaprenyl-pyrophosphoryl-MurNAc-pentapeptide (lipid intermediate I) to form undecaprenyl-pyrophosphoryl-MurNAc-(pentapeptide)GlcNAc (lipid intermediate II). In Anaeromyxobacter dehalogenans (strain 2CP-1 / ATCC BAA-258), this protein is UDP-N-acetylglucosamine--N-acetylmuramyl-(pentapeptide) pyrophosphoryl-undecaprenol N-acetylglucosamine transferase.